A 624-amino-acid polypeptide reads, in one-letter code: Chaperone protein HtpG (624 aa).

The tract at residues methionine 1–arginine 341 is a; substrate-binding. The b stretch occupies residues glutamate 342–lysine 550. The interval valine 551–lysine 624 is c.

It belongs to the heat shock protein 90 family. As to quaternary structure, homodimer.

It localises to the cytoplasm. Functionally, molecular chaperone. Has ATPase activity. In Clostridium acetobutylicum (strain ATCC 824 / DSM 792 / JCM 1419 / IAM 19013 / LMG 5710 / NBRC 13948 / NRRL B-527 / VKM B-1787 / 2291 / W), this protein is Chaperone protein HtpG.